The primary structure comprises 622 residues: Putative E3 ubiquitin-protein ligase ORTHRUS 4 (622 aa).

A PHD-type zinc finger spans residues 12–62; the sequence is DGVCMRCQVTPPSEETLTCGTCVTPWHVSCLLPESLASSTGDWECPDCSGV. The RING-type 1 zinc-finger motif lies at 129–169; sequence CSICIQLPERPVTTPCGHNFCLKCFEKWAVGQGKLTCMICR. Positions 258 to 407 constitute a YDG domain; that stretch reads TRNQGVLVGE…HKMCRYLFVR (150 aa). The segment at 498-555 adopts an RING-type 2 zinc-finger fold; sequence CQICRKVLSLPVTTPCAHNFCKACLEAKFAGITQLRDRSNGVRKLRAKKNIMTCPCCT. Positions 566 to 602 form a coiled coil; sequence QVNREMMEIIENFKKSEEEAEVAESSNISEEEEEESE. A disordered region spans residues 579 to 622; it reads KKSEEEAEVAESSNISEEEEEESEPPTKKIKMDNNSVGDTSLSA. Positions 611 to 622 are enriched in polar residues; it reads DNNSVGDTSLSA.

It localises to the nucleus. It catalyses the reaction S-ubiquitinyl-[E2 ubiquitin-conjugating enzyme]-L-cysteine + [acceptor protein]-L-lysine = [E2 ubiquitin-conjugating enzyme]-L-cysteine + N(6)-ubiquitinyl-[acceptor protein]-L-lysine.. The protein operates within protein modification; protein ubiquitination. Its function is as follows. E3 ubiquitin-protein ligase. May participate in CpG methylation-dependent transcriptional regulation. The chain is Putative E3 ubiquitin-protein ligase ORTHRUS 4 (ORTH4) from Arabidopsis thaliana (Mouse-ear cress).